The following is a 2254-amino-acid chain: Voltage-dependent T-type calcium channel subunit alpha-1G (2254 aa).

Residues 1–48 form a disordered region; it reads MDEEEDGAGAEESGQPRSFTQLNDLSGAGGRQGPGSTEKDPGSADSEA. At 1–80 the chain is on the cytoplasmic side; sequence MDEEEDGAGA…RSWCLRTVCN (80 aa). Over residues 15–24 the composition is skewed to polar residues; it reads QPRSFTQLND. One copy of the I repeat lies at 68–398; the sequence is SRPRSWCLRT…LCLVVIATQF (331 aa). A helical transmembrane segment spans residues 81-101; that stretch reads PWFERVSMLVILLNCVTLGMF. Topologically, residues 102–119 are extracellular; sequence RPCEDIACDSQRCRILQA. The chain crosses the membrane as a helical span at residues 120–141; that stretch reads FDDFIFAFFAVEMVVKMVALGI. Residues 142-150 lie on the Cytoplasmic side of the membrane; it reads FGKKCYLGD. The chain crosses the membrane as a helical span at residues 151–170; sequence TWNRLDFFIVIAGMLEYSLD. Residues 171–175 lie on the Extracellular side of the membrane; that stretch reads LQNVS. N173 is a glycosylation site (N-linked (GlcNAc...) asparagine). Residues 176-193 traverse the membrane as a helical segment; that stretch reads FSAVRTVRVLRPLRAINR. The Cytoplasmic portion of the chain corresponds to 194–213; that stretch reads VPSMRILVTLLLDTLPMLGN. A helical membrane pass occupies residues 214-234; sequence VLLLCFFVFFIFGIVGVQLWA. The Extracellular segment spans residues 235-370; it reads GLLRNRCFLP…YFVMDAHSFY (136 aa). N-linked (GlcNAc...) asparagine glycosylation is found at N246, N306, N310, and N322. Residues 371 to 395 form a helical membrane-spanning segment; the sequence is NFIYFILLIIVGSFFMINLCLVVIA. Residues 396–744 are Cytoplasmic-facing; it reads TQFSETKQRE…DTFRKIVDSK (349 aa). Residue S467 is modified to Phosphoserine. Over residues 494–506 the composition is skewed to basic residues; it reads LVHHHHHHHHHYH. 4 disordered regions span residues 494–513, 525–553, 579–598, and 699–721; these read LVHH…GTLR, DANG…AESV, ASGR…TSPP, and DAQH…GPDA. The span at 534–545 shows a compositional bias: pro residues; the sequence is LPPPSTPTPSGG. A Phosphoserine modification is found at S716. One copy of the II repeat lies at 730-968; it reads WRLICDTFRK…LLVAILVEGF (239 aa). Residues 745 to 765 traverse the membrane as a helical segment; sequence YFGRGIMIAILVNTLSMGIEY. Residues 766-778 are Extracellular-facing; it reads HEQPEELTNALEI. Residues 779 to 800 form a helical membrane-spanning segment; that stretch reads SNIVFTSLFALEMLLKLLVYGP. Residues 801 to 806 are Cytoplasmic-facing; the sequence is FGYIKN. Residues 807–825 traverse the membrane as a helical segment; that stretch reads PYNIFDGVIVVISVWEIVG. Residues 826-833 are Extracellular-facing; the sequence is QQGGGLSV. The helical transmembrane segment at 834 to 857 threads the bilayer; the sequence is LRTFRLMRVLKLVRFLPALQRQLV. Residues 858 to 868 are Cytoplasmic-facing; that stretch reads VLMKTMDNVAT. A helical transmembrane segment spans residues 869-889; it reads FCMLLMLFIFIFSILGMHLFG. At 890 to 940 the chain is on the extracellular side; that stretch reads CKFASERDGDTLPDRKNFDSLLWAIVTVFQILTQEDWNKVLYNGMASTSSW. A helical transmembrane segment spans residues 941-965; sequence AALYFIALMTFGNYVLFNLLVAILV. The Cytoplasmic portion of the chain corresponds to 966–1251; it reads EGFQAEGDAT…SRFRLLCHRI (286 aa). The segment at 1024–1209 is disordered; that stretch reads TPMSHPKSSS…GDDDNDEGNL (186 aa). 2 stretches are compositionally biased toward low complexity: residues 1041–1052 and 1065–1091; these read GSGSRRTSSSGS and PPSA…SRNS. 2 stretches are compositionally biased toward acidic residues: residues 1117-1126 and 1196-1206; these read ESQDEEESSE and PQLDGDDDNDE. Residues S1118, S1124, and S1125 each carry the phosphoserine modification. Residues 1242–1519 form an III repeat; it reads SRFRLLCHRI…MFVGVVVENF (278 aa). Residues 1252 to 1274 traverse the membrane as a helical segment; it reads ITHKMFDHVVLVIIFLNCITIAM. At 1275–1292 the chain is on the extracellular side; the sequence is ERPKIDPHSAERIFLTLS. The chain crosses the membrane as a helical span at residues 1293 to 1313; it reads NYIFTAVFLAEMTVKVVALGW. The Cytoplasmic segment spans residues 1314–1323; sequence CFGEQAYLRS. A helical membrane pass occupies residues 1324–1343; sequence SWNVLDGLLVLISVIDILVS. Residues 1344–1357 lie on the Extracellular side of the membrane; that stretch reads MVSDSGTKILGMLR. The chain crosses the membrane as a helical span at residues 1358–1379; that stretch reads VLRLLRTLRPLRVISRAQGLKL. The Cytoplasmic portion of the chain corresponds to 1380-1389; that stretch reads VVETLMSSLK. A helical transmembrane segment spans residues 1390–1413; sequence PIGNIVVICCAFFIIFGILGVQLF. The Extracellular segment spans residues 1414–1490; sequence KGKFFVCQGE…DQQPIMNHNP (77 aa). N-linked (GlcNAc...) asparagine glycans are attached at residues N1427 and N1430. Residues 1491-1516 form a helical membrane-spanning segment; sequence WMLLYFISFLLIVAFFVLNMFVGVVV. Residues 1517-1578 lie on the Cytoplasmic side of the membrane; sequence ENFHKCRQHQ…RLLVHHLCTS (62 aa). One copy of the IV repeat lies at 1564-1822; it reads DYSRFRLLVH…VVIAVLMKHL (259 aa). Residues 1579–1599 traverse the membrane as a helical segment; sequence HYLDLFITGVIGLNVVTMAME. Residues 1600–1613 are Extracellular-facing; it reads HYQQPQILDEALKI. A helical transmembrane segment spans residues 1614-1635; that stretch reads CNYIFTVIFVFESVFKLVAFGF. Topologically, residues 1636 to 1642 are cytoplasmic; it reads RRFFQDR. Residues 1643-1661 traverse the membrane as a helical segment; it reads WNQLDLAIVLLSIMGITLE. The Extracellular portion of the chain corresponds to 1662–1675; the sequence is EIEVNLSLPINPTI. An N-linked (GlcNAc...) asparagine glycan is attached at N1666. Residues 1676–1699 form a helical membrane-spanning segment; sequence IRIMRVLRIARVLKLLKMAVGMRA. Topologically, residues 1700 to 1713 are cytoplasmic; the sequence is LLHTVMQALPQVGN. The chain crosses the membrane as a helical span at residues 1714 to 1734; sequence LGLLFMLLFFIFAALGVELFG. Residues 1735–1794 are Extracellular-facing; the sequence is DLECDETHPCEGLGRHATFRNFGMAFLTLFRVSTGDNWNGIMKDTLRDCDQESTCYNTVI. The helical transmembrane segment at 1795–1822 threads the bilayer; sequence SPIYFVSFVLTAQFVLVNVVIAVLMKHL. Over 1823-2254 the chain is Cytoplasmic; it reads EESNKEAKEE…LSSDPTDMDP (432 aa). A disordered region spans residues 2153-2254; that stretch reads DSGSQPRLCP…LSSDPTDMDP (102 aa). Positions 2184–2193 are enriched in low complexity; sequence SPPSISIDPP. Polar residues-rich tracts occupy residues 2220 to 2232 and 2240 to 2254; these read PSVS…TAAS and LSLS…DMDP.

It belongs to the calcium channel alpha-1 subunit (TC 1.A.1.11) family. CACNA1G subfamily. In terms of processing, in response to raising of intracellular calcium, the T-type channels are activated by CaM-kinase II. As to expression, highly expressed in brain. Moderate expression in heart; low expression in placenta, kidney and lung.

The protein localises to the cell membrane. It localises to the cytoplasm. It catalyses the reaction Ca(2+)(in) = Ca(2+)(out). Voltage-sensitive calcium channels (VSCC) mediate the entry of calcium ions into excitable cells and are also involved in a variety of calcium-dependent processes, including muscle contraction, hormone or neurotransmitter release, gene expression, cell motility, cell division and cell death. The isoform alpha-1G gives rise to T-type calcium currents. T-type calcium channels belong to the 'low-voltage activated (LVA)' group and are strongly blocked by nickel and mibefradil. A particularity of this type of channels is an opening at quite negative potentials and a voltage-dependent inactivation. T-type channels serve pacemaking functions in both central neurons and cardiac nodal cells and support calcium signaling in secretory cells and vascular smooth muscle. They may also be involved in the modulation of firing patterns of neurons which is important for information processing as well as in cell growth processes. The polypeptide is Voltage-dependent T-type calcium channel subunit alpha-1G (Cacna1g) (Rattus norvegicus (Rat)).